Here is a 274-residue protein sequence, read N- to C-terminus: Undecaprenyl-diphosphatase (274 aa).

The next 7 membrane-spanning stretches (helical) occupy residues 40 to 60, 90 to 110, 114 to 134, 147 to 167, 190 to 210, 221 to 241, and 252 to 272; these read PGAA…LMFF, WFII…KDVI, FRSL…LGVA, ISLR…IPGV, YAFL…LKDI, PTIV…AWLL, and FVLY…TGVI.

Belongs to the UppP family.

Its subcellular location is the cell membrane. It catalyses the reaction di-trans,octa-cis-undecaprenyl diphosphate + H2O = di-trans,octa-cis-undecaprenyl phosphate + phosphate + H(+). Its function is as follows. Catalyzes the dephosphorylation of undecaprenyl diphosphate (UPP). Confers resistance to bacitracin. This is Undecaprenyl-diphosphatase from Nocardioides sp. (strain ATCC BAA-499 / JS614).